The sequence spans 404 residues: 6-hydroxytryptophan 2,3-dioxygenase fscD (404 aa).

H341 serves as a coordination point for heme b.

It belongs to the indoleamine 2,3-dioxygenase family. It depends on heme as a cofactor.

The protein operates within secondary metabolite biosynthesis. In terms of biological role, 6-hydroxytryptophan 2,3-dioxygenase; part of the fragmented gene cluster that mediates the biosynthesis of fusarochromene, a tryptophan-derived metabolite closely related to a group of mycotoxins including fusarochromanone. Within the pathway, fscD is responsible of the cleavage of the pyrrole ring of 6-hydroxytryptophan. The first step of the pathway is the epimerization of L-tryptophan to D-tryptophan in the presence of the NRPS-like tryptophan epimerase fscC. D-tryptophan is subsequently hydroxylated by the tryptophan 6-hydroxylase fscE to yield 6-hydroxytryptophan. The pyrrole ring undergoes cleavaged by the tryptophan 2,3-dioxygenase fscD and is finally converted to 4-hydroxykyrunenine by the hydrolase fscH. The NRPS-like oxidoreductase fscA reduces the carboxyl group to primary alcohol and the DMATS-type prenyltransferase fscG performs prenylation, followed by the formation of a chromene ring catalyzed by the oxidoreductase fscI, which leads to desacetylfusarochromene. Epoxidation by fscF and rearrangement reactions of chromene double bonds convert compound desacetylfusarochromene to fusarochromanones. Although specific acetyltransferases were not found near the fsc gene cluster, several predicted enzymes containing the N-acetyltransferase superfamily domain are present in the genome of F.equiseti. These predicted enzymes may have the potential to convert desacetylfusarochromene to fusarochromene. The sequence is that of 6-hydroxytryptophan 2,3-dioxygenase fscD from Fusarium equiseti (Fusarium scirpi).